We begin with the raw amino-acid sequence, 351 residues long: Dihydroorotate dehydrogenase (quinone) (351 aa).

FMN-binding positions include 61-65 (AGLDK) and threonine 85. A substrate-binding site is contributed by lysine 65. 110–114 (NRMGF) contacts substrate. Positions 139 and 172 each coordinate FMN. Asparagine 172 contacts substrate. The active-site Nucleophile is the serine 175. Asparagine 177 contributes to the substrate binding site. Lysine 217 and threonine 245 together coordinate FMN. 246–247 (NT) contacts substrate. Residues glycine 268, glycine 297, and 318-319 (YS) each bind FMN.

This sequence belongs to the dihydroorotate dehydrogenase family. Type 2 subfamily. As to quaternary structure, monomer. The cofactor is FMN.

The protein localises to the cell membrane. The catalysed reaction is (S)-dihydroorotate + a quinone = orotate + a quinol. Its pathway is pyrimidine metabolism; UMP biosynthesis via de novo pathway; orotate from (S)-dihydroorotate (quinone route): step 1/1. Functionally, catalyzes the conversion of dihydroorotate to orotate with quinone as electron acceptor. This is Dihydroorotate dehydrogenase (quinone) from Xanthomonas oryzae pv. oryzae (strain PXO99A).